The chain runs to 816 residues: Neuroligin-4, Y-linked (816 aa).

The first 43 residues, 1–43, serve as a signal peptide directing secretion; that stretch reads MLRPQGLLWLPLLFTSVCVMLNSNVLLWITALAIKFTLIDSQA. The Extracellular portion of the chain corresponds to 44 to 676; the sequence is QYPVVNTNYG…TKRDYSTELS (633 aa). N-linked (GlcNAc...) asparagine glycosylation occurs at Asn-102. 2 cysteine pairs are disulfide-bonded: Cys-110-Cys-146 and Cys-306-Cys-317. The tract at residues 359 to 364 is interaction with NRXN1; it reads QGEFLN. Cys-476 and Cys-510 are disulfide-bonded. Residue Asn-511 is glycosylated (N-linked (GlcNAc...) asparagine). The tract at residues 636 to 659 is disordered; sequence TKRPAITPANNPKHSKDPHKTGPE. The segment covering 649 to 658 has biased composition (basic and acidic residues); it reads HSKDPHKTGP. A helical transmembrane segment spans residues 677–697; that stretch reads VTIAVGASLLFLNILAFAALY. At 698–816 the chain is on the cytoplasmic side; sequence YKKDKRRHET…LPHGHSTTRV (119 aa). Ser-712 bears the Phosphoserine mark.

The protein belongs to the type-B carboxylesterase/lipase family. As to quaternary structure, homodimer. Interacts with NRXN1 in a calcium-dependent manner. Interaction with neurexins is mediated by heparan sulfate glycan modification on neurexin. Interacts through its C-terminus with DLG4/PSD-95 third PDZ domain. In terms of tissue distribution, expressed in fetal and adult brain, prostate and testis.

Its subcellular location is the cell membrane. The protein localises to the postsynaptic density membrane. In terms of biological role, cell surface protein involved in cell-cell-interactions via its interactions with neurexin family members. This is Neuroligin-4, Y-linked (NLGN4Y) from Homo sapiens (Human).